The chain runs to 417 residues: uncharacterized protein (417 aa).

It belongs to the MG032/MG096/MG288 family.

This is an uncharacterized protein from Mycoplasma pneumoniae (strain ATCC 29342 / M129 / Subtype 1) (Mycoplasmoides pneumoniae).